The chain runs to 822 residues: Pentatricopeptide repeat-containing protein At2g18940, chloroplastic (822 aa).

The disordered stretch occupies residues 1 to 42 (MDGALFPHKPPYPIQSKRPPPSQSSNQSIKFSSATLHLPPPS). The transit peptide at 1–77 (MDGALFPHKP…SAAARFPSLE (77 aa)) directs the protein to the chloroplast. Over residues 8-22 (HKPPYPIQSKRPPPS) the composition is skewed to pro residues. Over residues 23–37 (QSSNQSIKFSSATLH) the composition is skewed to low complexity. 17 PPR repeats span residues 209–243 (DVRAYTTILHAYSRTGKYEKAIDLFERMKEMGPSP), 244–279 (TLVTYNVILDVFGKMGRSWRKILGVLDEMRSKGLKF), 280–314 (DEFTCSTVLSACAREGLLREAKEFFAELKSCGYEP), 315–349 (GTVTYNALLQVFGKAGVYTEALSVLKEMEENSCPA), 350–384 (DSVTYNELVAAYVRAGFSKEAAGVIEMMTKKGVMP), 385–419 (NAITYTTVIDAYGKAGKEDEALKLFYSMKEAGCVP), 420–454 (NTCTYNAVLSLLGKKSRSNEMIKMLCDMKSNGCSP), 455–489 (NRATWNTMLALCGNKGMDKFVNRVFREMKSCGFEP), 490–524 (DRDTFNTLISAYGRCGSEVDASKMYGEMTRAGFNA), 525–559 (CVTTYNALLNALARKGDWRSGENVISDMKSKGFKP), 560–594 (TETSYSLMLQCYAKGGNYLGIERIENRIKEGQIFP), 595–629 (SWMLLRTLLLANFKCRALAGSERAFTLFKKHGYKP), 630–664 (DMVIFNSMLSIFTRNNMYDQAEGILESIREDGLSP), 665–699 (DLVTYNSLMDMYVRRGECWKAEEILKTLEKSQLKP), 700–734 (DLVSYNTVIKGFCRRGLMQEAVRMLSEMTERGIRP), 735–769 (CIFTYNTFVSGYTAMGMFAEIEDVIECMAKNDCRP), and 770–800 (NELTFKMVVDGYCRAGKYSEAMDFVSKIKTF).

It belongs to the PPR family. P subfamily.

The protein localises to the plastid. It is found in the chloroplast. This is Pentatricopeptide repeat-containing protein At2g18940, chloroplastic from Arabidopsis thaliana (Mouse-ear cress).